The sequence spans 262 residues: Thrombin-like enzyme gyroxin B1.4 (262 aa).

Positions 1–18 (MVLIRVLANLLILQLSYA) are cleaved as a signal peptide. The propeptide occupies 19 to 262 (QKSSELVIGG…AGNTIVNCPP (244 aa)). A Peptidase S1 domain is found at 25–253 (VIGGDECNIN…HLDWIQSIIA (229 aa)). Cystine bridges form between cysteine 31–cysteine 165, cysteine 52–cysteine 68, cysteine 102–cysteine 260, cysteine 144–cysteine 214, cysteine 176–cysteine 193, and cysteine 204–cysteine 229. The active-site Charge relay system is the histidine 67. Residue asparagine 105 is glycosylated (N-linked (GlcNAc...) asparagine). Aspartate 112 serves as the catalytic Charge relay system. The Charge relay system role is filled by serine 208.

This sequence belongs to the peptidase S1 family. Snake venom subfamily. Monomer. As to expression, expressed by the venom gland.

The protein resides in the secreted. Its function is as follows. Thrombin-like snake venom serine protease. Displays a specificity similar to trypsin. Releases only fibrinopeptide A in the conversion of fibrinogen to fibrin. Shows coagulant, esterase and amidase activities. Reversibly increases the permeability of the blood brain barrier (BBB) in mice. Induces the barrel rotation syndrome in mice, which is manifested by gyroxin-like, rapid rolling motions. This syndrome may be due to its effect on BBB permeability, and certainly also to other actions affecting endogenous substrates present in the endothelium, nervous tissues or blood. The sequence is that of Thrombin-like enzyme gyroxin B1.4 from Crotalus durissus terrificus (South American rattlesnake).